The primary structure comprises 313 residues: Homoserine O-acetyltransferase (313 aa).

Cys-142 serves as the catalytic Acyl-thioester intermediate. Residues Lys-163 and Ser-191 each coordinate substrate. His-234 acts as the Proton acceptor in catalysis. Residue Glu-236 is part of the active site. Arg-248 provides a ligand contact to substrate.

This sequence belongs to the MetA family.

It is found in the cytoplasm. The catalysed reaction is L-homoserine + acetyl-CoA = O-acetyl-L-homoserine + CoA. It functions in the pathway amino-acid biosynthesis; L-methionine biosynthesis via de novo pathway; O-acetyl-L-homoserine from L-homoserine: step 1/1. Transfers an acetyl group from acetyl-CoA to L-homoserine, forming acetyl-L-homoserine. The sequence is that of Homoserine O-acetyltransferase from Streptococcus sanguinis (strain SK36).